The chain runs to 208 residues: FMRFamide-like neuropeptide 18 (208 aa).

A signal peptide spans 1–21 (MQRWSGVLLISLCCLLRGALA). A propeptide spanning residues 22 to 83 (YTEPIYEIVE…VWEKRESSVQ (62 aa)) is cleaved from the precursor. Phe93 is modified (phenylalanine amide). The propeptide occupies 97–101 (AYFDE). A Phenylalanine amide modification is found at Phe111. Positions 115–119 (SYFDE) are excised as a propeptide. At Phe129 the chain carries Phenylalanine amide. Positions 133–137 (DVPMD) are excised as a propeptide. The residue at position 147 (Phe147) is a Phenylalanine amide. Residues 151 to 158 (DYMADSFD) constitute a propeptide that is removed on maturation. A phenylalanine amide mark is found at Phe169 and Phe180. Positions 184–195 (SDLEEHYAGVLL) are excised as a propeptide. Phe205 carries the post-translational modification Phenylalanine amide.

It belongs to the FARP (FMRFamide related peptide) family. Post-translationally, may be processed by convertase egl-3. In terms of tissue distribution, expressed in head neurons and weakly in ventral nerve cord. Expressed in the interneurons AVA, AIY and RIG, the motor neuron RIM and the pharyngeal neurons M2 and M3. EMPGVLRF-amide: Expressed in cholinergic pharyngeal motoneurons M2 and M3.

It localises to the secreted. Functionally, FMRFamide-like neuropeptides. Ligand to G-protein coupled receptor npr-1. Involved in modulating locomotion quiescence during the sleep-like state called lethargus which occurs during molting between larval and adult stages, acting via npr-1. Together with flp-1, plays a homeostatic role by acting on the GABAergic neural transmission at neuromuscular junctions to prevent overexcitation of the locomotor circuit. Plays a role in the navigational capacity of sperm and the targeting of sperm derived from males to the fertilization site in the uterus of hermaphrodites. Its function is as follows. SVPGVLRF-amide: Excites muscle tension. Activates the G-protein coupled receptor npr-1 more effectively than other flp-18 peptides. Inhibits the activity of dissected pharyngeal myogenic muscle system. This chain is FMRFamide-like neuropeptide 18, found in Caenorhabditis elegans.